The sequence spans 439 residues: RNA polymerase II-associated protein RBA50 (439 aa).

2 disordered regions span residues 1–35 (MDLL…GFPE) and 49–79 (LREK…SEAK). Over residues 15–30 (SVESNDNGTLSTNNCG) the composition is skewed to polar residues.

It belongs to the RPAP1 family.

Its subcellular location is the cytoplasm. Its function is as follows. Forms an interface between the RNA polymerase II enzyme and chaperone/scaffolding proteins, suggesting that it is required to connect RNA polymerase II to regulators of protein complex formation. This Saccharomyces cerevisiae (strain ATCC 204508 / S288c) (Baker's yeast) protein is RNA polymerase II-associated protein RBA50 (RBA50).